Reading from the N-terminus, the 211-residue chain is Large ribosomal subunit protein uL3 (211 aa).

The interval 122 to 147 (AIKRHGQSRGPMAHGSRYHRRPGSMG) is disordered.

The protein belongs to the universal ribosomal protein uL3 family. In terms of assembly, part of the 50S ribosomal subunit. Forms a cluster with proteins L14 and L19.

One of the primary rRNA binding proteins, it binds directly near the 3'-end of the 23S rRNA, where it nucleates assembly of the 50S subunit. This chain is Large ribosomal subunit protein uL3, found in Geobacillus sp. (strain WCH70).